Here is a 291-residue protein sequence, read N- to C-terminus: Urease accessory protein UreD (291 aa).

Belongs to the UreD family. In terms of assembly, ureD, UreF and UreG form a complex that acts as a GTP-hydrolysis-dependent molecular chaperone, activating the urease apoprotein by helping to assemble the nickel containing metallocenter of UreC. The UreE protein probably delivers the nickel.

Its subcellular location is the cytoplasm. Functionally, required for maturation of urease via the functional incorporation of the urease nickel metallocenter. This Polynucleobacter asymbioticus (strain DSM 18221 / CIP 109841 / QLW-P1DMWA-1) (Polynucleobacter necessarius subsp. asymbioticus) protein is Urease accessory protein UreD.